The following is a 1082-amino-acid chain: TNF receptor-associated factor homolog 1b (1082 aa).

A disordered region spans residues 1–54 (MAEAVDEDSGVGRSLEESSNGQHSQAGEALSEWRSSGQVENGTPSTSPSYWDID). Residue Ala2 is modified to N-acetylalanine. Over residues 33-49 (WRSSGQVENGTPSTSPS) the composition is skewed to polar residues. The 132-residue stretch at 67-198 (YGQYTWKIPK…SGCLTIEAKV (132 aa)) folds into the MATH domain. Disordered stretches follow at residues 358 to 388 (LPPK…ERDE), 440 to 666 (TEQR…SNVG), 697 to 762 (SIVN…QVVL), 780 to 800 (LSAP…APII), 812 to 841 (SSVQ…NQQT), and 858 to 889 (SSSS…PTSS). 2 stretches are compositionally biased toward basic and acidic residues: residues 359 to 388 (PPKD…ERDE) and 440 to 453 (TEQR…EREK). Residues 446–507 (RGAAEREKKS…EEEKDSVTEK (62 aa)) are a coiled coil. Residues 454-471 (KSKKKQAKQKRNKNKGKD) show a composition bias toward basic residues. Over residues 472-488 (KRKEEKVSFATHAKDLE) the composition is skewed to basic and acidic residues. 2 stretches are compositionally biased toward low complexity: residues 519–534 (GDVS…SADI) and 560–573 (SSEG…ISIS). 2 stretches are compositionally biased toward polar residues: residues 588–630 (DDSS…QQVK) and 645–666 (QPST…SNVG). 2 stretches are compositionally biased toward low complexity: residues 858–871 (SSSS…SSHG) and 878–889 (PSSSYSQAPTSS).

In terms of assembly, forms homooligomers. Interacts with SNC1, RPS2 and CPR1/CPR30. Interacts with ATG6.

It is found in the cytoplasm. It localises to the cell membrane. Functions redundantly with TRAF1A in the regulation of plant immune response. Contributes to the turnover of the nucleotide-binding domain and leucine-rich repeat-containing (NB-LRR) immune receptors SNC1 and RPS2. May associate with an E3 ubiquitin-protein ligase complex, which modulates ubiquitination and subsequent degradation of NB-LRR immune sensors to maintain their homeostasis. Functions redundantly with TRAF1A in the regulation of autophagosome formation. Required for SINAT1- and SINAT2-mediated ubiquitination and destabilization of ATG6. Functions as a molecular adapter that helps to regulate autophagy by modulating ATG6 stability. The chain is TNF receptor-associated factor homolog 1b from Arabidopsis thaliana (Mouse-ear cress).